The following is a 304-amino-acid chain: uncharacterized protein (304 aa).

This is an uncharacterized protein from Acanthamoeba polyphaga (Amoeba).